Consider the following 99-residue polypeptide: Malonate decarboxylase acyl carrier protein (99 aa).

At Ser25 the chain carries O-(phosphoribosyl dephospho-coenzyme A)serine.

Belongs to the MdcC family. In terms of processing, covalently binds the prosthetic group of malonate decarboxylase.

It localises to the cytoplasm. Functionally, subunit of malonate decarboxylase, it is an acyl carrier protein to which acetyl and malonyl thioester residues are bound via a 2'-(5''-phosphoribosyl)-3'-dephospho-CoA prosthetic group and turn over during the catalytic mechanism. This Stutzerimonas stutzeri (strain A1501) (Pseudomonas stutzeri) protein is Malonate decarboxylase acyl carrier protein.